The sequence spans 204 residues: Glycerol-3-phosphate acyltransferase (204 aa).

The next 5 membrane-spanning stretches (helical) occupy residues 8-28 (ILIF…CYIF), 53-73 (VLAA…VVIA), 81-101 (FITA…IFFG), 116-136 (FGFS…VAII), and 155-175 (VIFT…IIIL).

It belongs to the PlsY family. As to quaternary structure, probably interacts with PlsX.

The protein resides in the cell inner membrane. It carries out the reaction an acyl phosphate + sn-glycerol 3-phosphate = a 1-acyl-sn-glycero-3-phosphate + phosphate. Its pathway is lipid metabolism; phospholipid metabolism. Catalyzes the transfer of an acyl group from acyl-phosphate (acyl-PO(4)) to glycerol-3-phosphate (G3P) to form lysophosphatidic acid (LPA). This enzyme utilizes acyl-phosphate as fatty acyl donor, but not acyl-CoA or acyl-ACP. This chain is Glycerol-3-phosphate acyltransferase, found in Francisella tularensis subsp. holarctica (strain OSU18).